Consider the following 305-residue polypeptide: GS homeobox 2 (305 aa).

2 disordered regions span residues 115–151 (DAQFCPRVSHAHHHHHPPQHHHHHHQPQQPGSAAAAA) and 259–305 (KKEG…ISPL). The span at 123 to 140 (SHAHHHHHPPQHHHHHHQ) shows a compositional bias: basic residues. Residues 141 to 151 (PQQPGSAAAAA) are compositionally biased toward low complexity. Positions 203-262 (GKRMRTAFTSTQLLELEREFSSNMYLSRLRRIEIATYLNLSEKQVKIWFQNRRVKHKKEG) form a DNA-binding region, homeobox.

This sequence belongs to the Antp homeobox family.

The protein resides in the nucleus. Transcription factor that binds 5'-CNAATTAG-3' DNA sequence and regulates the expression of numerous genes including genes important for brain development. During telencephalic development, causes ventralization of pallial progenitors and, depending on the developmental stage, specifies different neuronal fates. At early stages, necessary and sufficient to correctly specify the ventral lateral ganglionic eminence (LGE) and its major derivatives, the striatal projection neurons. At later stages, may specify LGE progenitors toward dorsal LGE fates, including olfactory bulb interneurons. This is GS homeobox 2 (Gsx2) from Mus musculus (Mouse).